A 581-amino-acid chain; its full sequence is UvrABC system protein C (581 aa).

In terms of domain architecture, GIY-YIG spans 15-94 (REPGVYLFEQ…IKRHRPPYNV (80 aa)). A UVR domain is found at 202–237 (GVLADPLRREMEAAAQNQEFERAANLRDKLGAVEAL).

The protein belongs to the UvrC family. Interacts with UvrB in an incision complex.

The protein resides in the cytoplasm. In terms of biological role, the UvrABC repair system catalyzes the recognition and processing of DNA lesions. UvrC both incises the 5' and 3' sides of the lesion. The N-terminal half is responsible for the 3' incision and the C-terminal half is responsible for the 5' incision. In Haloarcula marismortui (strain ATCC 43049 / DSM 3752 / JCM 8966 / VKM B-1809) (Halobacterium marismortui), this protein is UvrABC system protein C.